The following is a 518-amino-acid chain: uncharacterized protein (518 aa).

2 consecutive ABC transporter domains span residues 4–260 (LSVK…QLEA) and 324–518 (LIFE…TKVL). ATP contacts are provided by residues 36 to 43 (GANGEGKS) and 357 to 364 (GANGIGKT).

It belongs to the ABC transporter superfamily.

This is an uncharacterized protein from Bacillus subtilis (strain 168).